The sequence spans 47 residues: Delta-actitoxin-Ael1a (47 aa).

3 disulfide bridges follow: cysteine 4-cysteine 44, cysteine 6-cysteine 34, and cysteine 27-cysteine 45.

Belongs to the sea anemone sodium channel inhibitory toxin family. Type I subfamily. Expressed in ectodermal glands. Not expressed in nematocytes.

The protein localises to the secreted. Binds specifically to voltage-gated sodium channels (Nav), thereby delaying their inactivation during signal transduction. It strongly stimulates mammalian cardiac muscle contraction. Paralyzes the shore crab (C.maenas) by tetanic contractions after intramuscular injection. In Anthopleura elegantissima (Green aggregating anemone), this protein is Delta-actitoxin-Ael1a.